The sequence spans 257 residues: 5'-nucleotidase SurE (257 aa).

Residues D8, D9, S40, and N95 each contribute to the a divalent metal cation site.

Belongs to the SurE nucleotidase family. The cofactor is a divalent metal cation.

It is found in the cytoplasm. It carries out the reaction a ribonucleoside 5'-phosphate + H2O = a ribonucleoside + phosphate. Functionally, nucleotidase that shows phosphatase activity on nucleoside 5'-monophosphates. This Desulfovibrio desulfuricans (strain ATCC 27774 / DSM 6949 / MB) protein is 5'-nucleotidase SurE.